A 471-amino-acid polypeptide reads, in one-letter code: 3-isopropylmalate dehydratase large subunit (471 aa).

Positions 347, 407, and 410 each coordinate [4Fe-4S] cluster.

It belongs to the aconitase/IPM isomerase family. LeuC type 1 subfamily. Heterodimer of LeuC and LeuD. [4Fe-4S] cluster is required as a cofactor.

It catalyses the reaction (2R,3S)-3-isopropylmalate = (2S)-2-isopropylmalate. It functions in the pathway amino-acid biosynthesis; L-leucine biosynthesis; L-leucine from 3-methyl-2-oxobutanoate: step 2/4. In terms of biological role, catalyzes the isomerization between 2-isopropylmalate and 3-isopropylmalate, via the formation of 2-isopropylmaleate. This chain is 3-isopropylmalate dehydratase large subunit, found in Geobacillus kaustophilus (strain HTA426).